A 354-amino-acid chain; its full sequence is Ferrochelatase (354 aa).

Fe cation is bound by residues His214 and Glu295.

The protein belongs to the ferrochelatase family.

The protein localises to the cytoplasm. The enzyme catalyses heme b + 2 H(+) = protoporphyrin IX + Fe(2+). The protein operates within porphyrin-containing compound metabolism; protoheme biosynthesis; protoheme from protoporphyrin-IX: step 1/1. Functionally, catalyzes the ferrous insertion into protoporphyrin IX. The protein is Ferrochelatase of Burkholderia vietnamiensis (strain G4 / LMG 22486) (Burkholderia cepacia (strain R1808)).